The sequence spans 144 residues: Dynein light chain Tctex-type protein 2B (144 aa).

The protein belongs to the dynein light chain Tctex-type family. As to quaternary structure, light chain of the cytoplasmic dynein complex 2, a multisubunit complex composed at least of eleven different proteins. The cytoplasmic dynein 2 complex consists of two catalytic heavy chains (HCs) and a number of non-catalytic subunits presented by intermediate chains (ICs), light intermediate chains (LICs) and light chains (LCs). Among them, a heavy chain (DYNC2H1), two intermediate chains (DYNC2I2 and DYNC2I1), a light intermediate chain (DYNC2LI1), and a light chain (DYNLT2B) are unique to the dynein-2 complex, but a subset of the light chains are also shared by dynein-1 and dynein-2 complexes. The dimer DYNLT2B-DYNLT1/DYNLT3 interacts with DYNC2I1; this interaction is crucial for retrograde trafficking of ciliary proteins.

The protein localises to the dynein axonemal particle. Its function is as follows. Acts as one of several non-catalytic accessory components of the cytoplasmic dynein 2 complex (dynein-2 complex), a motor protein complex that drives the movement of cargos along microtubules within cilia and flagella in concert with the intraflagellar transport (IFT) system. Required for proper retrograde ciliary transport. This chain is Dynein light chain Tctex-type protein 2B (Dynlt2b), found in Mus musculus (Mouse).